A 333-amino-acid chain; its full sequence is Cytochrome f (333 aa).

The signal sequence occupies residues 1-44 (MRNACTRARLTRTARAMVKTLFIAIASVTFFFTSDLALPQSAAA). Tyr-45, Cys-66, Cys-69, and His-70 together coordinate heme. The chain crosses the membrane as a helical span at residues 299-318 (VGWLIAFVALVMLAQVMLVL).

Belongs to the cytochrome f family. In terms of assembly, the 4 large subunits of the cytochrome b6-f complex are cytochrome b6, subunit IV (17 kDa polypeptide, PetD), cytochrome f and the Rieske protein, while the 4 small subunits are PetG, PetL, PetM and PetN. The complex functions as a dimer. Heme is required as a cofactor.

Its subcellular location is the cellular thylakoid membrane. Component of the cytochrome b6-f complex, which mediates electron transfer between photosystem II (PSII) and photosystem I (PSI), cyclic electron flow around PSI, and state transitions. The polypeptide is Cytochrome f (Nostoc sp. (strain PCC 7120 / SAG 25.82 / UTEX 2576)).